A 656-amino-acid chain; its full sequence is Protein sly1 homolog (656 aa).

Repeat copies occupy residues 85–121, 203–245, 419–456, and 460–496. Residues 85–496 are 4 X approximate repeats; that stretch reads DENLDRIQQD…QATQYEGGGT (412 aa).

It belongs to the STXBP/unc-18/SEC1 family.

It is found in the cytoplasm. The protein localises to the membrane. Functionally, non-vital for development. The protein is Protein sly1 homolog (Slh) of Drosophila virilis (Fruit fly).